Consider the following 361-residue polypeptide: FK506-binding protein 39 kDa (361 aa).

A disordered region spans residues 122–256; that stretch reads LVDEEDEEEE…PSSPKTRTLK (135 aa). Positions 123 to 174 are enriched in acidic residues; sequence VDEEDEEEEESDEDYDLSPTEEDLVETVSGDEESEEESESEDNSASEEDELD. Position 192 is a phosphoserine (Ser192). Basic and acidic residues predominate over residues 208–227; the sequence is QKVEGTPVKEKKVAFAEKLE. Thr213 is subject to Phosphothreonine. The span at 241–252 shows a compositional bias: polar residues; that stretch reads QASSNAPSSPKT. Ser249 carries the post-translational modification Phosphoserine. Residues 275–361 form the PPIase FKBP-type domain; the sequence is GKKVEMRYIG…VFEVKLVRVH (87 aa).

This sequence belongs to the FKBP-type PPIase family. FKBP3/4 subfamily.

The protein localises to the nucleus. It is found in the nucleolus. It carries out the reaction [protein]-peptidylproline (omega=180) = [protein]-peptidylproline (omega=0). In terms of biological role, PPIase that acts as a histone chaperone. Histone proline isomerase that increases the rate of cis-trans isomerization at prolines on the histone H3 N-terminal tail. Proline isomerization influences H3 methylation thereby regulating gene expression. The chain is FK506-binding protein 39 kDa from Schizosaccharomyces pombe (strain 972 / ATCC 24843) (Fission yeast).